The chain runs to 271 residues: Protein-L-isoaspartate O-methyltransferase (271 aa).

Pro residues predominate over residues 1–15 (MRKPVTPPGNPPRPR). Residues 1–60 (MRKPVTPPGNPPRPRSPGYGSTSLAPGITAANSNTRISPPTLARPAPAAGAGGQGGNLGL) are disordered. Residues 39–49 (PPTLARPAPAA) are compositionally biased toward low complexity. Serine 119 is an active-site residue.

The protein belongs to the methyltransferase superfamily. L-isoaspartyl/D-aspartyl protein methyltransferase family.

It localises to the cytoplasm. The enzyme catalyses [protein]-L-isoaspartate + S-adenosyl-L-methionine = [protein]-L-isoaspartate alpha-methyl ester + S-adenosyl-L-homocysteine. Functionally, catalyzes the methyl esterification of L-isoaspartyl residues in peptides and proteins that result from spontaneous decomposition of normal L-aspartyl and L-asparaginyl residues. It plays a role in the repair and/or degradation of damaged proteins. In Bordetella petrii (strain ATCC BAA-461 / DSM 12804 / CCUG 43448), this protein is Protein-L-isoaspartate O-methyltransferase.